A 291-amino-acid polypeptide reads, in one-letter code: ATP synthase gamma chain (291 aa).

Belongs to the ATPase gamma chain family. F-type ATPases have 2 components, CF(1) - the catalytic core - and CF(0) - the membrane proton channel. CF(1) has five subunits: alpha(3), beta(3), gamma(1), delta(1), epsilon(1). CF(0) has three main subunits: a, b and c.

Its subcellular location is the cell inner membrane. Produces ATP from ADP in the presence of a proton gradient across the membrane. The gamma chain is believed to be important in regulating ATPase activity and the flow of protons through the CF(0) complex. The polypeptide is ATP synthase gamma chain (Neisseria meningitidis serogroup A / serotype 4A (strain DSM 15465 / Z2491)).